Reading from the N-terminus, the 339-residue chain is Fructose-1,6-bisphosphatase class 1 (339 aa).

Mg(2+) is bound by residues glutamate 92, aspartate 114, leucine 116, and aspartate 117. Residues 117-120, asparagine 213, and lysine 279 contribute to the substrate site; that span reads DGSS. Glutamate 285 provides a ligand contact to Mg(2+).

It belongs to the FBPase class 1 family. As to quaternary structure, homotetramer. The cofactor is Mg(2+).

The protein resides in the cytoplasm. It carries out the reaction beta-D-fructose 1,6-bisphosphate + H2O = beta-D-fructose 6-phosphate + phosphate. The protein operates within carbohydrate biosynthesis; gluconeogenesis. The polypeptide is Fructose-1,6-bisphosphatase class 1 (Acidovorax sp. (strain JS42)).